An 89-amino-acid chain; its full sequence is Probable Fe(2+)-trafficking protein (89 aa).

This sequence belongs to the Fe(2+)-trafficking protein family.

Functionally, could be a mediator in iron transactions between iron acquisition and iron-requiring processes, such as synthesis and/or repair of Fe-S clusters in biosynthetic enzymes. This chain is Probable Fe(2+)-trafficking protein, found in Legionella pneumophila (strain Lens).